The primary structure comprises 481 residues: Glutamate--cysteine ligase (481 aa).

The protein belongs to the glutamate--cysteine ligase type 1 family. Type 1 subfamily.

It catalyses the reaction L-cysteine + L-glutamate + ATP = gamma-L-glutamyl-L-cysteine + ADP + phosphate + H(+). It functions in the pathway sulfur metabolism; glutathione biosynthesis; glutathione from L-cysteine and L-glutamate: step 1/2. This Clostridium acetobutylicum (strain ATCC 824 / DSM 792 / JCM 1419 / IAM 19013 / LMG 5710 / NBRC 13948 / NRRL B-527 / VKM B-1787 / 2291 / W) protein is Glutamate--cysteine ligase.